We begin with the raw amino-acid sequence, 111 residues long: Macrodomain Ori protein (111 aa).

It belongs to the MaoP family.

Functionally, involved in the organization of the Ori region of the chromosome into a macrodomain (MD). It constrains DNA mobility in the Ori macrodomain and limits long-distance DNA interactions with other chromosomal regions. The chain is Macrodomain Ori protein from Haemophilus influenzae (strain ATCC 51907 / DSM 11121 / KW20 / Rd).